The chain runs to 146 residues: Anti-sigma F factor (146 aa).

It belongs to the anti-sigma-factor family.

It carries out the reaction L-seryl-[protein] + ATP = O-phospho-L-seryl-[protein] + ADP + H(+). The catalysed reaction is L-threonyl-[protein] + ATP = O-phospho-L-threonyl-[protein] + ADP + H(+). Functionally, binds to sigma F and blocks its ability to form an RNA polymerase holoenzyme (E-sigma F). Phosphorylates SpoIIAA on a serine residue. This phosphorylation may enable SpoIIAA to act as an anti-anti-sigma factor that counteracts SpoIIAB and thus releases sigma F from inhibition. The polypeptide is Anti-sigma F factor (Geobacillus thermodenitrificans (strain NG80-2)).